The following is a 404-amino-acid chain: Lysophospholipid transporter LplT (404 aa).

Helical transmembrane passes span 16–36 (MIAV…LLFA), 53–73 (ILQM…GQFA), 91–111 (AGAL…LVGV), 139–159 (MMEA…GVLA), 164–184 (GVAL…NMFI), 195–213 (SWRP…LVLW), 227–247 (LFWG…PIAL), 253–273 (ATPT…AGAA), 285–305 (CLPA…QHSM), 310–330 (LLLI…NALL), 350–370 (GENT…KLGV), and 372–392 (VIAV…LLWG).

This sequence belongs to the major facilitator superfamily. LplT (TC 2.A.1.42) family.

It localises to the cell inner membrane. Catalyzes the facilitated diffusion of 2-acyl-glycero-3-phosphoethanolamine (2-acyl-GPE) into the cell. The polypeptide is Lysophospholipid transporter LplT (Yersinia enterocolitica serotype O:8 / biotype 1B (strain NCTC 13174 / 8081)).